The chain runs to 253 residues: Triosephosphate isomerase, cytosolic (253 aa).

2 residues coordinate substrate: N10 and K12. Catalysis depends on H96, which acts as the Electrophile. The Proton acceptor role is filled by E166.

It belongs to the triosephosphate isomerase family. As to quaternary structure, homodimer.

Its subcellular location is the cytoplasm. It catalyses the reaction D-glyceraldehyde 3-phosphate = dihydroxyacetone phosphate. It functions in the pathway carbohydrate biosynthesis; gluconeogenesis. The protein operates within carbohydrate degradation; glycolysis; D-glyceraldehyde 3-phosphate from glycerone phosphate: step 1/1. This chain is Triosephosphate isomerase, cytosolic, found in Coptis japonica (Japanese goldthread).